The following is a 243-amino-acid chain: Triosephosphate isomerase (243 aa).

9 to 11 (NWK) contacts substrate. Catalysis depends on histidine 96, which acts as the Electrophile. The Proton acceptor role is filled by glutamate 165. Substrate is bound by residues glycine 171, serine 204, and 225–226 (GG).

The protein belongs to the triosephosphate isomerase family. Homodimer.

It is found in the cytoplasm. It carries out the reaction D-glyceraldehyde 3-phosphate = dihydroxyacetone phosphate. Its pathway is carbohydrate biosynthesis; gluconeogenesis. It participates in carbohydrate degradation; glycolysis; D-glyceraldehyde 3-phosphate from glycerone phosphate: step 1/1. Its function is as follows. Involved in the gluconeogenesis. Catalyzes stereospecifically the conversion of dihydroxyacetone phosphate (DHAP) to D-glyceraldehyde-3-phosphate (G3P). In Nostoc punctiforme (strain ATCC 29133 / PCC 73102), this protein is Triosephosphate isomerase.